The chain runs to 301 residues: Averufin oxidase A (301 aa).

The signal sequence occupies residues 1–23; that stretch reads MPTYALLGATGATGSAILRCLLA. Residues Asn62, Asn86, and Asn190 are each glycosylated (N-linked (GlcNAc...) asparagine).

It belongs to the avfA family.

It functions in the pathway mycotoxin biosynthesis. Functionally, averufin oxidase A; part of the fragmented gene cluster that mediates the biosynthesis of dothistromin (DOTH), a polyketide toxin very similar in structure to the aflatoxin precursor, versicolorin B. The first step of the pathway is the conversion of acetate to norsolorinic acid (NOR) and requires the fatty acid synthase subunits hexA and hexB, as well as the polyketide synthase pksA. PksA combines a hexanoyl starter unit and 7 malonyl-CoA extender units to synthesize the precursor NOR. The hexanoyl starter unit is provided to the acyl-carrier protein (ACP) domain by the fungal fatty acid synthase hexA/hexB. The second step is the conversion of NOR to averantin (AVN) and requires the norsolorinic acid ketoreductase nor1, which catalyzes the dehydration of norsolorinic acid to form (1'S)-averantin. The cytochrome P450 monooxygenase avnA then catalyzes the hydroxylation of AVN to 5'hydroxyaverantin (HAVN). The next step is performed by adhA that transforms HAVN to averufin (AVF). Averufin might then be converted to hydroxyversicolorone by cypX and avfA. Hydroxyversicolorone is further converted versiconal hemiacetal acetate (VHA) by moxY. VHA is then the substrate for the versiconal hemiacetal acetate esterase est1 to yield versiconal (VAL). Versicolorin B synthase vbsA then converts VAL to versicolorin B (VERB) by closing the bisfuran ring. Then, the activity of the versicolorin B desaturase verB leads to versicolorin A (VERA). DotB, a predicted chloroperoxidase, may perform epoxidation of the A-ring of VERA. Alternatively, a cytochrome P450, such as cypX or avnA could catalyze this step. It is also possible that another, uncharacterized, cytochrome P450 enzyme is responsible for this step. Opening of the epoxide could potentially be achieved by the epoxide hydrolase epoA. However, epoA seems not to be required for DOTH biosynthesis, but other epoxide hydrolases may have the ability to complement this hydrolysis. Alternatively, opening of the epoxide ring could be achieved non-enzymatically. The next step is the deoxygenation of ring A to yield the 5,8-dihydroxyanthraquinone which is most likely catalyzed by the NADPH dehydrogenase encoded by ver1. The last stages of DOTH biosynthesis are proposed to involve hydroxylation of the bisfuran. OrdB and norB might have oxidative roles here. An alternative possibility is that cytochrome P450 monoogenases such as avnA and cypX might perform these steps in addition to previously proposed steps. This is Averufin oxidase A from Dothistroma septosporum (Red band needle blight fungus).